The following is a 346-amino-acid chain: Protein RecA (346 aa).

An ATP-binding site is contributed by 67 to 74 (GPESSGKT).

This sequence belongs to the RecA family.

The protein localises to the cytoplasm. Its function is as follows. Can catalyze the hydrolysis of ATP in the presence of single-stranded DNA, the ATP-dependent uptake of single-stranded DNA by duplex DNA, and the ATP-dependent hybridization of homologous single-stranded DNAs. It interacts with LexA causing its activation and leading to its autocatalytic cleavage. The chain is Protein RecA from Mycobacterium ulcerans (strain Agy99).